The sequence spans 253 residues: MGTILDEIVEQKQREVAELYEIYTPVKTKRKTHSLVEALQQFTVIAEVKRASPSKGDINLHVDVRKQVGTYEKCGAGAVSVLTDGQFFKGSFHDLQTAREESNIPLLCKDFIIDKIQIDRAYEAGADIILLIVAALTKEKLKELYSYVLEKGLEVIVEVHDEQELETAIVLNPHVIGINNRNLKTFEVDLSQTEKLGKRLNEEKLLWISESGIHSKEDIIRVKRAGAKGVLVGEALMTSSSISSFFEDCKVNI.

Belongs to the TrpC family.

It carries out the reaction 1-(2-carboxyphenylamino)-1-deoxy-D-ribulose 5-phosphate + H(+) = (1S,2R)-1-C-(indol-3-yl)glycerol 3-phosphate + CO2 + H2O. The protein operates within amino-acid biosynthesis; L-tryptophan biosynthesis; L-tryptophan from chorismate: step 4/5. The polypeptide is Indole-3-glycerol phosphate synthase (Bacillus cereus (strain B4264)).